We begin with the raw amino-acid sequence, 369 residues long: Cobalt-precorrin-5B C(1)-methyltransferase (369 aa).

It belongs to the CbiD family.

The catalysed reaction is Co-precorrin-5B + S-adenosyl-L-methionine = Co-precorrin-6A + S-adenosyl-L-homocysteine. It functions in the pathway cofactor biosynthesis; adenosylcobalamin biosynthesis; cob(II)yrinate a,c-diamide from sirohydrochlorin (anaerobic route): step 6/10. Functionally, catalyzes the methylation of C-1 in cobalt-precorrin-5B to form cobalt-precorrin-6A. This chain is Cobalt-precorrin-5B C(1)-methyltransferase, found in Leptospira borgpetersenii serovar Hardjo-bovis (strain JB197).